The following is a 109-amino-acid chain: Anti-sigma-B factor antagonist (109 aa).

Residues 3-109 (INVDVKQNEN…ISAKSEGGVQ (107 aa)) enclose the STAS domain. 2 positions are modified to phosphoserine: Ser52 and Ser56. Position 57 is a phosphothreonine (Thr57).

The protein belongs to the anti-sigma-factor antagonist family. Monomer. In stressed cells, forms a complex with RsbW. The predominant form of this complex has a stoichiometry of 2:2 (one dimer of RsbW is bound by two monomers of RsbV). Binds to RsbW in the presence of low levels of ATP or under conditions of energy or environmental stress (through dephosphorylation by RsbP or RsbU). Phosphorylated by RsbW on a serine residue. Dephosphorylated by RsbP or RsbU.

In terms of biological role, positive regulator of sigma-B activity. Non-phosphorylated RsbV binds to RsbW, preventing its association with sigma-B. When phosphorylated, releases RsbW, which is then free to complex with and inactivate sigma-B. The polypeptide is Anti-sigma-B factor antagonist (rsbV) (Bacillus subtilis (strain 168)).